The sequence spans 212 residues: Pyrrolidone-carboxylate peptidase (212 aa).

Residues Glu-80, Cys-143, and His-165 contribute to the active site.

Belongs to the peptidase C15 family. As to quaternary structure, homotetramer.

It localises to the cytoplasm. The enzyme catalyses Release of an N-terminal pyroglutamyl group from a polypeptide, the second amino acid generally not being Pro.. Removes 5-oxoproline from various penultimate amino acid residues except L-proline. This Vibrio vulnificus (strain YJ016) protein is Pyrrolidone-carboxylate peptidase.